A 369-amino-acid chain; its full sequence is Chaperone protein DnaJ (369 aa).

The 67-residue stretch at Asp-7–Gly-73 folds into the J domain. Residues Gly-143–Lys-225 form a CR-type zinc finger. Cys-156, Cys-159, Cys-173, Cys-176, Cys-199, Cys-202, Cys-213, and Cys-216 together coordinate Zn(2+). CXXCXGXG motif repeat units lie at residues Cys-156–Gly-163, Cys-173–Gly-180, Cys-199–Gly-206, and Cys-213–Gly-220.

It belongs to the DnaJ family. In terms of assembly, homodimer. It depends on Zn(2+) as a cofactor.

It is found in the cytoplasm. Its function is as follows. Participates actively in the response to hyperosmotic and heat shock by preventing the aggregation of stress-denatured proteins and by disaggregating proteins, also in an autonomous, DnaK-independent fashion. Unfolded proteins bind initially to DnaJ; upon interaction with the DnaJ-bound protein, DnaK hydrolyzes its bound ATP, resulting in the formation of a stable complex. GrpE releases ADP from DnaK; ATP binding to DnaK triggers the release of the substrate protein, thus completing the reaction cycle. Several rounds of ATP-dependent interactions between DnaJ, DnaK and GrpE are required for fully efficient folding. Also involved, together with DnaK and GrpE, in the DNA replication of plasmids through activation of initiation proteins. The protein is Chaperone protein DnaJ of Thermotoga sp. (strain RQ2).